A 244-amino-acid polypeptide reads, in one-letter code: Prolactin-7D1 (244 aa).

The N-terminal stretch at 1 to 30 (MLPSLIQPCSSGTLLMLLMSNLFLWEKVSS) is a signal peptide. Disulfide bonds link C99-C215 and C232-C240.

The protein belongs to the somatotropin/prolactin family.

Its subcellular location is the secreted. In Mus musculus (Mouse), this protein is Prolactin-7D1 (Prl7d1).